The following is a 266-amino-acid chain: Ribosomal RNA small subunit methyltransferase A (266 aa).

Residues N13, L15, G40, E61, D86, and N110 each contribute to the S-adenosyl-L-methionine site.

The protein belongs to the class I-like SAM-binding methyltransferase superfamily. rRNA adenine N(6)-methyltransferase family. RsmA subfamily.

Its subcellular location is the cytoplasm. It carries out the reaction adenosine(1518)/adenosine(1519) in 16S rRNA + 4 S-adenosyl-L-methionine = N(6)-dimethyladenosine(1518)/N(6)-dimethyladenosine(1519) in 16S rRNA + 4 S-adenosyl-L-homocysteine + 4 H(+). In terms of biological role, specifically dimethylates two adjacent adenosines (A1518 and A1519) in the loop of a conserved hairpin near the 3'-end of 16S rRNA in the 30S particle. May play a critical role in biogenesis of 30S subunits. The polypeptide is Ribosomal RNA small subunit methyltransferase A (Hydrogenovibrio crunogenus (strain DSM 25203 / XCL-2) (Thiomicrospira crunogena)).